Here is a 571-residue protein sequence, read N- to C-terminus: MSDKPLTDVTFSSFDLHPALIAGLESAGFTRCTPIQALTLPVALPGGDVAGQAQTGTGKTLAFLVAVMNRLLIRPALADRKPEDPRALILAPTRELAIQIHKDAVKFGADLGLRFALVYGGVDYDKQRELLQQGVDVIIATPGRLIDYVKQHKVVSLHACEICVLDEADRMFDLGFIKDIRFLLRRMPERGTRQTLLFSATLSHRVLELAYEHMNEPEKLVVETESITAARVRQRIYFPSDEEKQTLLLGLLSRSEGARTMVFVNTKAFVERVARTLERHGYRVGVLSGDVPQKKRESLLNRFQKGQLEILVATDVAARGLHIDGVKYVYNYDLPFDAEDYVHRIGRTARLGEEGDAISFACERYAMSLPDIEAYIEQKIPVEPVTSELLTPLPRAPRVPVEGEEADDDAGDSVGTIFREAREQRAAEEQRRGGGRGGPGGSRSGSGGGRRDGAGADGKPRPRRKPRVEGQAPAAAASTEHPVVAAVAAQAPSAGVADAERAPRKRRRRRNGRPVEGAEPALASTPVPAPAAPRKPTQVVAKPVRAAAKPSGSPSLLSRIGRRLRSLVSGN.

The Q motif signature appears at 9 to 37; the sequence is VTFSSFDLHPALIAGLESAGFTRCTPIQA. The 181-residue stretch at 40-220 folds into the Helicase ATP-binding domain; the sequence is LPVALPGGDV…YEHMNEPEKL (181 aa). 53–60 contacts ATP; it reads AQTGTGKT. A DEAD box motif is present at residues 166–169; it reads DEAD. One can recognise a Helicase C-terminal domain in the interval 231–393; that stretch reads RVRQRIYFPS…PVTSELLTPL (163 aa). Positions 391–558 are disordered; that stretch reads TPLPRAPRVP…KPSGSPSLLS (168 aa). The span at 402 to 411 shows a compositional bias: acidic residues; that stretch reads EGEEADDDAG. A compositionally biased stretch (basic and acidic residues) spans 419–432; the sequence is REAREQRAAEEQRR. A compositionally biased stretch (gly residues) spans 435-448; it reads GRGGPGGSRSGSGG. The span at 449–460 shows a compositional bias: basic and acidic residues; the sequence is GRRDGAGADGKP. A compositionally biased stretch (low complexity) spans 483 to 497; sequence VVAAVAAQAPSAGVA. Positions 503 to 512 are enriched in basic residues; that stretch reads PRKRRRRRNG. The segment covering 539–558 has biased composition (low complexity); that stretch reads VVAKPVRAAAKPSGSPSLLS.

This sequence belongs to the DEAD box helicase family. RhlB subfamily. In terms of assembly, component of the RNA degradosome, which is a multiprotein complex involved in RNA processing and mRNA degradation.

The protein resides in the cytoplasm. It carries out the reaction ATP + H2O = ADP + phosphate + H(+). Functionally, DEAD-box RNA helicase involved in RNA degradation. Has RNA-dependent ATPase activity and unwinds double-stranded RNA. The protein is ATP-dependent RNA helicase RhlB of Xanthomonas axonopodis pv. citri (strain 306).